A 270-amino-acid chain; its full sequence is tRNA pseudouridine synthase A (270 aa).

Asp51 serves as the catalytic Nucleophile. Tyr109 contributes to the substrate binding site.

The protein belongs to the tRNA pseudouridine synthase TruA family. Homodimer.

It catalyses the reaction uridine(38/39/40) in tRNA = pseudouridine(38/39/40) in tRNA. Formation of pseudouridine at positions 38, 39 and 40 in the anticodon stem and loop of transfer RNAs. The chain is tRNA pseudouridine synthase A from Variovorax paradoxus (strain S110).